The following is a 200-amino-acid chain: Glycerol-3-phosphate acyltransferase (200 aa).

A run of 5 helical transmembrane segments spans residues 2–22 (FNIPAVAVSYLIGSLSFAVIV), 51–71 (KAAALTLLGDAAKGLVAVLLA), 84–104 (AIAAVALAALVGHMWPVFFGF), 114–134 (LGVLLALSPATALVCALIWLV), and 158–178 (LFFMPHTSWIFATLAIAILVL).

The protein belongs to the PlsY family. Probably interacts with PlsX.

The protein localises to the cell inner membrane. It carries out the reaction an acyl phosphate + sn-glycerol 3-phosphate = a 1-acyl-sn-glycero-3-phosphate + phosphate. The protein operates within lipid metabolism; phospholipid metabolism. In terms of biological role, catalyzes the transfer of an acyl group from acyl-phosphate (acyl-PO(4)) to glycerol-3-phosphate (G3P) to form lysophosphatidic acid (LPA). This enzyme utilizes acyl-phosphate as fatty acyl donor, but not acyl-CoA or acyl-ACP. This Neisseria gonorrhoeae (strain ATCC 700825 / FA 1090) protein is Glycerol-3-phosphate acyltransferase.